Consider the following 139-residue polypeptide: Ribonuclease P protein component (139 aa).

The interval 120 to 139 (KATTGGECTPKSEKCVTAPR) is disordered.

Belongs to the RnpA family. In terms of assembly, consists of a catalytic RNA component (M1 or rnpB) and a protein subunit.

It catalyses the reaction Endonucleolytic cleavage of RNA, removing 5'-extranucleotides from tRNA precursor.. Its function is as follows. RNaseP catalyzes the removal of the 5'-leader sequence from pre-tRNA to produce the mature 5'-terminus. It can also cleave other RNA substrates such as 4.5S RNA. The protein component plays an auxiliary but essential role in vivo by binding to the 5'-leader sequence and broadening the substrate specificity of the ribozyme. The chain is Ribonuclease P protein component from Chlamydia pneumoniae (Chlamydophila pneumoniae).